The primary structure comprises 349 residues: Sterol-4-alpha-carboxylate 3-dehydrogenase ERG26, decarboxylating (349 aa).

Residues Gly-11 to Gly-17, Asp-62 to Leu-63, and Cys-84 to Ser-86 each bind NADP(+). Substrate-binding residues include Ser-124 and Tyr-151. NADP(+) is bound by residues Tyr-151, Lys-155, and Pro-179–Ile-182. Lys-155 acts as the Proton donor in catalysis.

This sequence belongs to the 3-beta-HSD family. In terms of assembly, heterotetramer of ERG25, ERG26, ERG27 and ERG28. ERG28 acts as a scaffold to tether ERG27 and other 4,4-demethylation-related enzymes, forming a demethylation enzyme complex, in the endoplasmic reticulum.

It localises to the endoplasmic reticulum membrane. It carries out the reaction 4beta-methylzymosterol-4alpha-carboxylate + NADP(+) = 3-dehydro-4-methylzymosterol + CO2 + NADPH. It participates in steroid biosynthesis; zymosterol biosynthesis; zymosterol from lanosterol: step 4/6. Its activity is regulated as follows. Inhibited by FR171456, a natural product with broad antifungal activity. Sterol-4-alpha-carboxylate 3-dehydrogenase; part of the third module of ergosterol biosynthesis pathway that includes the late steps of the pathway. ERG26 is a catalytic component of the C-4 demethylation complex that catalyzes the oxidative decarboxylation that results in a reduction of the 3-beta-hydroxy group at the C-3 carbon to an oxo group. The third module or late pathway involves the ergosterol synthesis itself through consecutive reactions that mainly occur in the endoplasmic reticulum (ER) membrane. Firstly, the squalene synthase ERG9 catalyzes the condensation of 2 farnesyl pyrophosphate moieties to form squalene, which is the precursor of all steroids. Squalene synthase is crucial for balancing the incorporation of farnesyl diphosphate (FPP) into sterol and nonsterol isoprene synthesis. Secondly, the squalene epoxidase ERG1 catalyzes the stereospecific oxidation of squalene to (S)-2,3-epoxysqualene, which is considered to be a rate-limiting enzyme in steroid biosynthesis. Then, the lanosterol synthase ERG7 catalyzes the cyclization of (S)-2,3 oxidosqualene to lanosterol, a reaction that forms the sterol core. In the next steps, lanosterol is transformed to zymosterol through a complex process involving various demethylation, reduction and desaturation reactions. The lanosterol 14-alpha-demethylase ERG11 (also known as CYP51) catalyzes C14-demethylation of lanosterol to produce 4,4'-dimethyl cholesta-8,14,24-triene-3-beta-ol, which is critical for ergosterol biosynthesis. The C-14 reductase ERG24 reduces the C14=C15 double bond of 4,4-dimethyl-cholesta-8,14,24-trienol to produce 4,4-dimethyl-cholesta-8,24-dienol. 4,4-dimethyl-cholesta-8,24-dienol is substrate of the C-4 demethylation complex ERG25-ERG26-ERG27 in which ERG25 catalyzes the three-step monooxygenation required for the demethylation of 4,4-dimethyl and 4alpha-methylsterols, ERG26 catalyzes the oxidative decarboxylation that results in a reduction of the 3-beta-hydroxy group at the C-3 carbon to an oxo group, and ERG27 is responsible for the reduction of the keto group on the C-3. ERG28 has a role as a scaffold to help anchor ERG25, ERG26 and ERG27 to the endoplasmic reticulum and ERG29 regulates the activity of the iron-containing C4-methylsterol oxidase ERG25. Then, the sterol 24-C-methyltransferase ERG6 catalyzes the methyl transfer from S-adenosyl-methionine to the C-24 of zymosterol to form fecosterol. The C-8 sterol isomerase ERG2 catalyzes the reaction which results in unsaturation at C-7 in the B ring of sterols and thus converts fecosterol to episterol. The sterol-C5-desaturase ERG3 then catalyzes the introduction of a C-5 double bond in the B ring to produce 5-dehydroepisterol. The C-22 sterol desaturase ERG5 further converts 5-dehydroepisterol into ergosta-5,7,22,24(28)-tetraen-3beta-ol by forming the C-22(23) double bond in the sterol side chain. Finally, ergosta-5,7,22,24(28)-tetraen-3beta-ol is substrate of the C-24(28) sterol reductase ERG4 to produce ergosterol. This is Sterol-4-alpha-carboxylate 3-dehydrogenase ERG26, decarboxylating from Saccharomyces cerevisiae (strain ATCC 204508 / S288c) (Baker's yeast).